We begin with the raw amino-acid sequence, 202 residues long: Small ribosomal subunit protein uS4c (202 aa).

The S4 RNA-binding domain occupies 90–154 (MRLDNIIFRL…SQSIITKNLN (65 aa)).

This sequence belongs to the universal ribosomal protein uS4 family. In terms of assembly, part of the 30S ribosomal subunit. Contacts protein S5. The interaction surface between S4 and S5 is involved in control of translational fidelity.

It is found in the plastid. It localises to the chloroplast. Its function is as follows. One of the primary rRNA binding proteins, it binds directly to 16S rRNA where it nucleates assembly of the body of the 30S subunit. In terms of biological role, with S5 and S12 plays an important role in translational accuracy. The chain is Small ribosomal subunit protein uS4c (rps4) from Ricciocarpos natans (Liverwort).